A 270-amino-acid chain; its full sequence is Putative phosphoenolpyruvate synthase regulatory protein (270 aa).

Residue 150–157 (GVSRCGKT) participates in ADP binding.

Belongs to the pyruvate, phosphate/water dikinase regulatory protein family. PSRP subfamily.

It carries out the reaction [pyruvate, water dikinase] + ADP = [pyruvate, water dikinase]-phosphate + AMP + H(+). The enzyme catalyses [pyruvate, water dikinase]-phosphate + phosphate + H(+) = [pyruvate, water dikinase] + diphosphate. Its function is as follows. Bifunctional serine/threonine kinase and phosphorylase involved in the regulation of the phosphoenolpyruvate synthase (PEPS) by catalyzing its phosphorylation/dephosphorylation. This chain is Putative phosphoenolpyruvate synthase regulatory protein, found in Aeromonas salmonicida (strain A449).